We begin with the raw amino-acid sequence, 351 residues long: 1-acylglycerol-3-phosphate O-acyltransferase ABHD5 (351 aa).

Positions proline 79–proline 184 constitute an AB hydrolase-1 domain. Phosphoserine is present on serine 124. The HXXXXD motif signature appears at histidine 329–aspartate 334.

Belongs to the peptidase S33 family. ABHD4/ABHD5 subfamily. As to quaternary structure, interacts with ADRP. Interacts with PLIN. Interacts with and PNPLA2. Interacts with PLIN5; promotes interaction with PNPLA2. As to expression, highly expressed in the adipose tissue and testes. Weakly expressed in the liver, muscle, kidney, and heart. Expressed by upper epidermal layers and dermal fibroblasts in skin, hepatocytes and hypothalamus in brain (at protein level).

The protein resides in the cytoplasm. It is found in the lipid droplet. It localises to the cytosol. It carries out the reaction a 1-acyl-sn-glycero-3-phosphate + an acyl-CoA = a 1,2-diacyl-sn-glycero-3-phosphate + CoA. The enzyme catalyses 1-(9Z-octadecenoyl)-sn-glycero-3-phosphate + (9Z)-octadecenoyl-CoA = 1,2-di-(9Z-octadecenoyl)-sn-glycero-3-phosphate + CoA. The catalysed reaction is 1-(9Z-octadecenoyl)-sn-glycero-3-phosphate + hexadecanoyl-CoA = 1-(9Z)-octadecenoyl-2-hexadecanoyl-sn-glycero-3-phosphate + CoA. It catalyses the reaction 1-(9Z-octadecenoyl)-sn-glycero-3-phosphate + octadecanoyl-CoA = 1-(9Z-octadecenoyl)-2-octadecanoyl-sn-glycero-3-phosphate + CoA. It carries out the reaction 1-(9Z-octadecenoyl)-sn-glycero-3-phosphate + (5Z,8Z,11Z,14Z)-eicosatetraenoyl-CoA = 1-(9Z)-octadecenoyl-2-(5Z,8Z,11Z,14Z)-eicosatetraenoyl-sn-glycero-3-phosphate + CoA. The enzyme catalyses eicosanoyl-CoA + 1-(9Z-octadecenoyl)-sn-glycero-3-phosphate = 1-(9Z)-octadecenoyl-2-eicosanoyl-sn-glycero-3-phosphate + CoA. The catalysed reaction is 1-hexadecanoyl-sn-glycero-3-phosphate + (9Z)-octadecenoyl-CoA = 1-hexadecanoyl-2-(9Z-octadecenoyl)-sn-glycero-3-phosphate + CoA. It catalyses the reaction 1-octadecanoyl-sn-glycero-3-phosphate + (9Z)-octadecenoyl-CoA = 1-octadecanoyl-2-(9Z-octadecenoyl)-sn-glycero-3-phosphate + CoA. It carries out the reaction 1-(5Z,8Z,11Z,14Z-eicosatetraenoyl)-sn-glycero-3-phosphate + (9Z)-octadecenoyl-CoA = 1-(5Z,8Z,11Z,14Z)-eicosatetraenoyl-2-(9Z)-octadecenoyl-sn-glycero-3-phosphate + CoA. With respect to regulation, acyltransferase activity is inhibited by detergents such as Triton X-100 and 3-[(3-cholamidopropyl)dimethylammonio]-1-propanesulfonate (CHAPS). Acyltransferase activity is inhibited by the presence of magnesium and calcium. Its function is as follows. Coenzyme A-dependent lysophosphatidic acid acyltransferase that catalyzes the transfer of an acyl group on a lysophosphatidic acid. Functions preferentially with 1-oleoyl-lysophosphatidic acid followed by 1-palmitoyl-lysophosphatidic acid, 1-stearoyl-lysophosphatidic acid and 1-arachidonoyl-lysophosphatidic acid as lipid acceptor. Functions preferentially with arachidonoyl-CoA followed by oleoyl-CoA as acyl group donors. Functions in phosphatidic acid biosynthesis. May regulate the cellular storage of triacylglycerol through activation of the phospholipase PNPLA2. Involved in keratinocyte differentiation. Regulates lipid droplet fusion. The polypeptide is 1-acylglycerol-3-phosphate O-acyltransferase ABHD5 (Mus musculus (Mouse)).